Here is a 244-residue protein sequence, read N- to C-terminus: MIIEIVTIFPLFFKSFCDNSIIKRALNQQKVQIKIHDLRKYSVNKHQQVDDCVYGGGVGMLLSFPPFFDCLQEIKTPQSKVILLSPQGKIFDQVQANNYASNTPHLIILCGNYEGVDARILKYVDQEISIGDYVLTGGEIAATVVVDAIVRLIPGVIKHESAFSDSHQQGLLKFPQYTRPQIYQNQEVPSVLLSGNHAQIENWRQKESLKITLQKRPDLLINKKLSSKEKVILEEIKQELKNNS.

S-adenosyl-L-methionine-binding positions include G111 and 130-135 (IGDYVL).

Belongs to the RNA methyltransferase TrmD family. As to quaternary structure, homodimer.

The protein resides in the cytoplasm. The enzyme catalyses guanosine(37) in tRNA + S-adenosyl-L-methionine = N(1)-methylguanosine(37) in tRNA + S-adenosyl-L-homocysteine + H(+). In terms of biological role, specifically methylates guanosine-37 in various tRNAs. The polypeptide is tRNA (guanine-N(1)-)-methyltransferase (Phytoplasma australiense).